The chain runs to 83 residues: Putative beta-neurotoxin RjAa17f (83 aa).

An N-terminal signal peptide occupies residues 1–18 (MKILIFIIASFMLIGVEC). Residues 19–82 (KEGYPMGRNG…VWDFSNIKCR (64 aa)) form the LCN-type CS-alpha/beta domain. Disulfide bonds link C29–C81, C33–C55, C40–C62, and C44–C64.

Belongs to the long (4 C-C) scorpion toxin superfamily. Sodium channel inhibitor family. Beta subfamily. Expressed by the venom gland.

It is found in the secreted. Its function is as follows. Beta toxins bind voltage-independently at site-4 of sodium channels (Nav) and shift the voltage of activation toward more negative potentials thereby affecting sodium channel activation and promoting spontaneous and repetitive firing. This is Putative beta-neurotoxin RjAa17f from Rhopalurus junceus (Caribbean blue scorpion).